Consider the following 54-residue polypeptide: Large ribosomal subunit protein bL33 (54 aa).

Belongs to the bacterial ribosomal protein bL33 family.

This chain is Large ribosomal subunit protein bL33, found in Corynebacterium diphtheriae (strain ATCC 700971 / NCTC 13129 / Biotype gravis).